A 340-amino-acid chain; its full sequence is Selenide, water dikinase (340 aa).

C13 is a catalytic residue. Residues K16 and 43 to 45 each bind ATP; that span reads ASD. D46 provides a ligand contact to Mg(2+). Residues D63, D86, and 133 to 135 contribute to the ATP site; that span reads GHS. D86 lines the Mg(2+) pocket. D221 is a Mg(2+) binding site.

It belongs to the selenophosphate synthase 1 family. Class I subfamily. In terms of assembly, homodimer. Mg(2+) serves as cofactor.

It catalyses the reaction hydrogenselenide + ATP + H2O = selenophosphate + AMP + phosphate + 2 H(+). In terms of biological role, synthesizes selenophosphate from selenide and ATP. The polypeptide is Selenide, water dikinase (Desulfitobacterium hafniense (strain DSM 10664 / DCB-2)).